Reading from the N-terminus, the 24-residue chain is Brevinin-1Sa (24 aa).

Cysteines 18 and 24 form a disulfide.

Expressed by the skin glands.

It localises to the secreted. Its function is as follows. Antibacterial activity against Gram-negative bacterium E.coli. The chain is Brevinin-1Sa from Lithobates sphenocephalus (Southern leopard frog).